We begin with the raw amino-acid sequence, 352 residues long: Molybdenum import ATP-binding protein ModC (352 aa).

Residues 1–229 (MLELNFSQTL…SVMNPWLPKE (229 aa)) enclose the ABC transporter domain. 31–38 (GVSGAGKT) contacts ATP. Residues 289-352 (QTSIRNVLRA…AQIKSVSITA (64 aa)) enclose the Mop domain.

Belongs to the ABC transporter superfamily. Molybdate importer (TC 3.A.1.8) family. As to quaternary structure, the complex is composed of two ATP-binding proteins (ModC), two transmembrane proteins (ModB) and a solute-binding protein (ModA).

The protein resides in the cell inner membrane. The enzyme catalyses molybdate(out) + ATP + H2O = molybdate(in) + ADP + phosphate + H(+). Functionally, part of the ABC transporter complex ModABC involved in molybdenum import. Responsible for energy coupling to the transport system. The protein is Molybdenum import ATP-binding protein ModC of Escherichia coli (strain K12).